The primary structure comprises 208 residues: Large ribosomal subunit protein uL3 (208 aa).

The disordered stretch occupies residues 116–148 (GFQGVIKRHGQSRGPMAHGSRYHRRPGSMGPVA).

The protein belongs to the universal ribosomal protein uL3 family. Part of the 50S ribosomal subunit. Forms a cluster with proteins L14 and L19.

Its function is as follows. One of the primary rRNA binding proteins, it binds directly near the 3'-end of the 23S rRNA, where it nucleates assembly of the 50S subunit. The polypeptide is Large ribosomal subunit protein uL3 (Streptococcus pyogenes serotype M5 (strain Manfredo)).